The sequence spans 267 residues: Imidazole glycerol phosphate synthase subunit HisF (267 aa).

Catalysis depends on residues D22 and D141.

This sequence belongs to the HisA/HisF family. Heterodimer of HisH and HisF.

It is found in the cytoplasm. The enzyme catalyses 5-[(5-phospho-1-deoxy-D-ribulos-1-ylimino)methylamino]-1-(5-phospho-beta-D-ribosyl)imidazole-4-carboxamide + L-glutamine = D-erythro-1-(imidazol-4-yl)glycerol 3-phosphate + 5-amino-1-(5-phospho-beta-D-ribosyl)imidazole-4-carboxamide + L-glutamate + H(+). It participates in amino-acid biosynthesis; L-histidine biosynthesis; L-histidine from 5-phospho-alpha-D-ribose 1-diphosphate: step 5/9. In terms of biological role, IGPS catalyzes the conversion of PRFAR and glutamine to IGP, AICAR and glutamate. The HisF subunit catalyzes the cyclization activity that produces IGP and AICAR from PRFAR using the ammonia provided by the HisH subunit. This is Imidazole glycerol phosphate synthase subunit HisF from Mycobacterium bovis (strain ATCC BAA-935 / AF2122/97).